The sequence spans 1450 residues: Arf-GAP with Rho-GAP domain, ANK repeat and PH domain-containing protein 1 (1450 aa).

Residues 6 to 70 (DAALSVAEWL…LAGLLRAHTS (65 aa)) form the SAM domain. The required for interaction with SH3KBP1 stretch occupies residues 81–90 (PVPMKRHIFR). 2 disordered regions span residues 89–144 (FRSP…LPPL) and 173–302 (TKEE…SSLS). A compositionally biased stretch (pro residues) spans 92-102 (PPVPATPPEPL). Over residues 190 to 199 (QSEEPLSTLP) the composition is skewed to low complexity. Over residues 200–219 (QGPPQPPSPPPCPPEIPPKP) the composition is skewed to pro residues. 2 stretches are compositionally biased toward acidic residues: residues 225–236 (EFDDSDYDEVPE) and 269–286 (EGEE…EDDH). S229 carries the post-translational modification Phosphoserine. Y231 is modified (phosphotyrosine; by PTK6). Positions 327–419 (PVIKAGWLDK…WMQALQQAMA (93 aa)) constitute a PH 1 domain. The residue at position 354 (T354) is a Phosphothreonine. S428 carries the post-translational modification Phosphoserine. Phosphotyrosine occurs at positions 431 and 504. Positions 440-529 (QPDRAGSLEL…WLEAMQGAIA (90 aa)) constitute a PH 2 domain. One can recognise an Arf-GAP domain in the interval 535-660 (SEVAERIWAA…RYHPLFGNQE (126 aa)). The segment at 550-576 (CADCGAPQPDWASINLCVVICKRCAGE) adopts a C4-type zinc-finger fold. The residue at position 738 (S738) is a Phosphoserine. The 108-residue stretch at 743-850 (TVSHSGFLYK…WVKCIAKAFV (108 aa)) folds into the PH 3 domain. The 186-residue stretch at 954-1139 (ASMGDTLSEQ…DLINHYVVVF (186 aa)) folds into the Rho-GAP domain. The Ras-associating domain maps to 1172–1261 (GDFICTVYLE…SHLVVKKHQA (90 aa)). Residues 1274–1396 (GDTKHGMMKF…WFATFLFVQH (123 aa)) enclose the PH 4 domain. Phosphoserine occurs at positions 1428 and 1435.

As to quaternary structure, interacts with SH3KBP1/CIN85 (via SH3 domains). The interaction is independent of EGF and does not affect ARAP1 GTPase-activating activity but is involved in regulating ubiquitination and endocytic trafficking of EGFR. ARAP1 competes with E3 ubiquitin-protein ligase CBL for binding to SH3KBP1, preventing interaction of CBL with SH3KBP1; this is likely to regulate SH3KBP1-mediated internalization of EGFR. Interacts with TNFRSF10A. Phosphorylated by PTK6 following EGF stimulation which enhances EGFR signaling by delaying EGFR down-regulation; the interaction is mediated by the SH2 domain of PTK6. Phosphorylation promotes association with the Golgi apparatus and endosomes. Detected in heart, skeletal muscle, spleen, kidney, liver, placenta, lung, peripheral blood leukocytes, adrenal gland, bone marrow, brain, lymph node, mammary gland, prostate, spinal cord, stomach, thyroid and trachea.

It localises to the cytoplasm. It is found in the golgi apparatus. The protein resides in the trans-Golgi network. The protein localises to the golgi stack. Its subcellular location is the cell membrane. It localises to the endosome. It is found in the multivesicular body. The protein resides in the cell projection. The protein localises to the ruffle. Its subcellular location is the podosome. It localises to the early endosome. Its function is as follows. Phosphatidylinositol 3,4,5-trisphosphate-dependent GTPase-activating protein that modulates actin cytoskeleton remodeling by regulating ARF and RHO family members. Activated by phosphatidylinositol 3,4,5-trisphosphate (PtdIns(3,4,5)P3) binding and, to a lesser extent, by phosphatidylinositol 3,4-bisphosphate (PtdIns(3,4)P2) binding. Has a preference for ARF1 and ARF5. Positively regulates the ring size of circular dorsal ruffles and promotes macropinocytosis. Acts as a bridging factor in osteoclasts to control actin and membrane dynamics. Regulates the condensing of osteoclast podosomes into sealing zones which segregate the bone-facing membrane from other membrane domains and are required for osteoclast resorption activity. Also regulates recruitment of the AP-3 complex to endosomal membranes and trafficking of lysosomal membrane proteins to the ruffled membrane border of osteoclasts to modulate bone resorption. Regulates the endocytic trafficking of EGFR. Regulates the incorporation of CD63 and CD9 into multivesicular bodies. Required in the retinal pigment epithelium (RPE) for photoreceptor survival due to its role in promoting RPE phagocytosis. The protein is Arf-GAP with Rho-GAP domain, ANK repeat and PH domain-containing protein 1 (ARAP1) of Homo sapiens (Human).